Reading from the N-terminus, the 330-residue chain is Polygalacturonase inhibitor (330 aa).

The first 24 residues, 1–24 (MELKFSTFLSLTLLFSSVLNPALS), serve as a signal peptide directing secretion. Intrachain disulfides connect C27–C57 and C58–C65. 7 LRR repeats span residues 69–92 (TNRINSLTIFAGQVSGQIPALVGD), 93–118 (LPYLETLEFHKQPNLTGPIQPAIAKL), 119–141 (KGLKSLRLSWTNLSGSVPDFLSQ), 142–166 (LKNLTFLDLSFNNLTGAIPSSLSEL), 167–192 (PNLGALRLDRNKLTGHIPISFGQFIG), 194–215 (VPDLYLSHNQLSGNIPTSFAQM), and 217–237 (FTSIDLSRNKLEGDASVIFGL). 4 N-linked (GlcNAc...) asparagine glycosylation sites follow: N106, N130, N144, and N154. N-linked (GlcNAc...) asparagine glycans are attached at residues N238 and N254. LRR repeat units lie at residues 239–261 (KTTQIVDLSRNLLEFNLSKVEFP), 262–285 (TSLTSLDINHNKIYGSIPVEFTQL), and 287–309 (FQFLNVSYNRLCGQIPVGGKLQS). N291 carries N-linked (GlcNAc...) asparagine glycosylation. Cystine bridges form between C298/C320 and C322/C329.

Belongs to the polygalacturonase-inhibiting protein family. As to quaternary structure, homodimer. Post-translationally, N-linked glycosylated. In terms of tissue distribution, mostly expressed in fruits, and, to a lower extent, in flowers and leaves.

The protein localises to the secreted. It is found in the extracellular space. The protein resides in the apoplast. It localises to the cell wall. Functionally, inhibitor of fungal polygalacturonase. It is an important factor for plant resistance to phytopathogenic fungi. This chain is Polygalacturonase inhibitor (PGIP), found in Pyrus communis (Pear).